The primary structure comprises 2920 residues: Cadherin-related hmr-1 (2920 aa).

A signal peptide spans 1-19; it reads MSWNILLILLISNLDEVLA. At 20-2779 the chain is on the extracellular side; it reads KTLLKLPSNA…AVSKLGISSP (2760 aa). N-linked (GlcNAc...) asparagine glycosylation is found at Asn72, Asn243, Asn253, Asn339, and Asn508. Cadherin domains are found at residues 322–422, 425–530, 531–642, 643–747, 749–865, 871–979, 980–1093, 1097–1211, 1212–1335, 1336–1436, 1438–1546, 1548–1661, 1662–1772, and 1772–1874; these read SSRS…PPSF, SPLP…PPQF, AKQE…VPTF, TRPL…SAVF, PTSQ…KPEF, YSDI…SPQF, ERPS…APKW, PDCK…VPQF, TVDL…APSF, EEQK…APQF, QQKY…SPIF, ERLF…APFF, EKTR…APHI, and IHGA…EPYT. N-linked (GlcNAc...) asparagine glycans are attached at residues Asn658, Asn685, Asn715, and Asn826. Asn1177 carries N-linked (GlcNAc...) asparagine glycosylation. Residue Asn1417 is glycosylated (N-linked (GlcNAc...) asparagine). Residue Asn1646 is glycosylated (N-linked (GlcNAc...) asparagine). Residues Asn1935, Asn2224, and Asn2232 are each glycosylated (N-linked (GlcNAc...) asparagine). The 38-residue stretch at 2246–2283 folds into the EGF-like 1 domain; the sequence is APPACQHSLCHNDGVCHNTNPGFFCECRNDGLKGARCQ. 3 disulfide bridges follow: Cys2250/Cys2261, Cys2255/Cys2270, and Cys2272/Cys2282. The region spanning 2284–2478 is the Laminin G-like domain; sequence GTTRSFGGNG…AFEQNSEKGC (195 aa). 2 N-linked (GlcNAc...) asparagine glycosylation sites follow: Asn2307 and Asn2332. 3 disulfides stabilise this stretch: Cys2452-Cys2478, Cys2501-Cys2515, and Cys2517-Cys2526. The region spanning 2492–2527 is the EGF-like 2 domain; that stretch reads SLNHCIHGDCFADVQGSGAMVAKCVCDPGWGGARCE. An N-linked (GlcNAc...) asparagine glycan is attached at Asn2623. The helical transmembrane segment at 2780 to 2800 threads the bilayer; the sequence is AIILILVSLALLILLVMMMVV. Topologically, residues 2801-2920 are cytoplasmic; that stretch reads YTRRSPGAFE…VTLESIESAQ (120 aa). Ser2839 carries the phosphoserine modification. Positions 2858–2891 are disordered; sequence IGGHPPHYPPRGMAPPKDDHELNSKIKDLETDQN. The span at 2873-2887 shows a compositional bias: basic and acidic residues; sequence PKDDHELNSKIKDLE. Position 2909 is a phosphoserine (Ser2909). Thr2912 is subject to Phosphothreonine. A phosphoserine mark is found at Ser2915 and Ser2918.

As to quaternary structure, monomer in solution. Isoform a is a component of a core catenin-cadherin complex consisting of hmr-1, hmp-1 and hmp-2; the complex localizes to adherens junctions. Isoform a interacts with hmp-2; the interaction is direct. Isoform a interacts (via intracellular domain) with jac-1. Post-translationally, phosphorylation at T-2912 increases the binding affinity for hmp-2. Sumoylated. Sumoylation prevents accumulation at adherens junctions and decreases the binding affinity for hmp-2. As to expression, expressed in epidermal cells (at protein level). Neuron-specific.

It is found in the cell membrane. It localises to the cell junction. The protein localises to the adherens junction. Its subcellular location is the cell projection. The protein resides in the dendrite. In terms of biological role, cadherins are calcium-dependent cell adhesion proteins. They preferentially interact with themselves in a homophilic manner in connecting cells; cadherins may thus contribute to the sorting of heterogeneous cell types. Required for adherens junction assembly and connecting adherens junctions to the cytoskeleton. Isoform a is required for cell migration during body enclosure and cell shape changes during body elongation. Required for proper localization of other junctional components, such as hmp-1, hmp-2, jac-1 and pac-1. Recruitment of pac-1 is required to establish cell polarity, independent of its role in cell adhesion. Required for primodial germ cell ingression and adherence to endodermal cells during gastrulation. Its function is as follows. Isoform b is involved in axonal guidance in a subset of motor neurons. The chain is Cadherin-related hmr-1 from Caenorhabditis elegans.